The primary structure comprises 86 residues: Small ribosomal subunit protein bS20 (86 aa).

Positions 1–25 (MANSASSRKRARQAVKRNKHNSQIR) are disordered. The span at 7 to 25 (SRKRARQAVKRNKHNSQIR) shows a compositional bias: basic residues.

This sequence belongs to the bacterial ribosomal protein bS20 family.

Functionally, binds directly to 16S ribosomal RNA. This chain is Small ribosomal subunit protein bS20, found in Vesicomyosocius okutanii subsp. Calyptogena okutanii (strain HA).